Consider the following 337-residue polypeptide: uncharacterized protein (337 aa).

A coiled-coil region spans residues Asn248–Leu276. The interval Gly285–Leu337 is disordered. Residues Arg287 to Glu296 are compositionally biased toward basic and acidic residues. Polar residues predominate over residues Thr297–Thr315.

This is an uncharacterized protein from Invertebrate iridescent virus 3 (IIV-3).